The sequence spans 263 residues: Small ribosomal subunit protein eS4, Y isoform 1 (263 aa).

Positions 42–104 (LPLIVFLRNR…TGEHFRLVYD (63 aa)) constitute an S4 RNA-binding domain.

This sequence belongs to the eukaryotic ribosomal protein eS4 family.

This chain is Small ribosomal subunit protein eS4, Y isoform 1 (RPS4Y1), found in Homo sapiens (Human).